The primary structure comprises 359 residues: Endosome-associated-trafficking regulator 1 (359 aa).

Ser-18 and Ser-74 each carry phosphoserine. Positions 100–125 (LLDEDEDEEDGWNGAYLPSAMEQTHS) are required for interaction with PTPN13. The tract at residues 153–180 (SLPPWTLSDSDSRISPTGSPSADFTAHG) is disordered. The span at 159 to 174 (LSDSDSRISPTGSPSA) shows a compositional bias: polar residues. A phosphoserine mark is found at Ser-167 and Ser-171. Residues 185 to 295 (DRHLRTLQIS…FKRENEALRS (111 aa)) adopt a coiled-coil conformation.

Belongs to the ENTR1 family. In terms of assembly, found in a complex with ENTR1, PTPN13 and GIT1. Interacts with PTPN13 (via the FERM domain). Interacts (via N-terminus) with GIT1 (via N- and C-terminus); this interaction is direct. Interacts with NOD2. Interacts (via N-terminus) with IFT88. Interacts with VPS35. In terms of processing, phosphorylated.

It localises to the cytoplasm. Its subcellular location is the early endosome. It is found in the endosome. The protein localises to the recycling endosome. The protein resides in the midbody. It localises to the cytoskeleton. Its subcellular location is the microtubule organizing center. It is found in the centrosome. The protein localises to the cilium basal body. In terms of biological role, endosome-associated protein that plays a role in membrane receptor sorting, cytokinesis and ciliogenesis. Involved in the endosome-to-plasma membrane trafficking and recycling of SNX27-retromer-dependent cargo proteins, such as GLUT1. Involved in the regulation of cytokinesis; the function may involve PTPN13 and GIT1. Plays a role in the formation of cilia. Involved in cargo protein localization, such as PKD2, at primary cilia. Involved in the presentation of the tumor necrosis factor (TNF) receptor TNFRSF1A on the cell surface, and hence in the modulation of the TNF-induced apoptosis. This Bos taurus (Bovine) protein is Endosome-associated-trafficking regulator 1.